The primary structure comprises 345 residues: Meiotically up-regulated gene 97 protein (345 aa).

The next 2 membrane-spanning stretches (helical) occupy residues Met292 to Met312 and Phe319 to Ile329.

The protein localises to the membrane. Required for correct meiotic chromosome segregation. Appears to also have role in sporulation. The sequence is that of Meiotically up-regulated gene 97 protein (mug97) from Schizosaccharomyces pombe (strain 972 / ATCC 24843) (Fission yeast).